A 682-amino-acid chain; its full sequence is Activating transcription factor 7-interacting protein 2 (682 aa).

Residues 120 to 148 (SRTTESPSRVFTEEAKDSLNTSENDSEHQ) form a disordered region. Polar residues predominate over residues 137 to 148 (SLNTSENDSEHQ). A coiled-coil region spans residues 328-378 (EIYSINYELFDKKLKELNQRIGKTECRNKHEGIADKLLAKIAKLQRRIKTV). S416 is subject to Phosphoserine. Composition is skewed to polar residues over residues 418-451 (IEKSSVNYEPSNPSEKGSKKINLSSDQNKSVSES) and 462-490 (ESPNLTTPITSNPTDTRKITSGNSSNSPN). Disordered regions lie at residues 418–491 (IEKS…SPNA) and 513–538 (NCNTESPVSPLESHSKAASNSKETTP). Phosphoserine occurs at positions 488 and 521. The span at 528–538 (KAASNSKETTP) shows a compositional bias: polar residues. The Fibronectin type-III domain occupies 575-680 (PPQKPELKVK…IKSIPGFSEN (106 aa)).

The protein belongs to the MCAF family. As to quaternary structure, interacts with MBD1, SETDB1 and SP1. Probably forms a complex with SETDB1 and MBD1.

The protein resides in the nucleus. Recruiter that couples transcriptional factors to general transcription apparatus and thereby modulates transcription regulation and chromatin formation. Can both act as an activator or a repressor depending on the context. Mediates MBD1-dependent transcriptional repression, probably by recruiting complexes containing SETDB1. The complex formed with MBD1 and SETDB1 represses transcription and probably couples DNA methylation and histone H3 'Lys-9' trimethylation (H3K9me3) activity. This is Activating transcription factor 7-interacting protein 2 (ATF7IP2) from Homo sapiens (Human).